A 294-amino-acid polypeptide reads, in one-letter code: Nucleotide-binding protein CLD_1131 (294 aa).

8 to 15 (GLSGAGKT) contributes to the ATP binding site. 59–62 (DIRG) lines the GTP pocket.

Belongs to the RapZ-like family.

In terms of biological role, displays ATPase and GTPase activities. The protein is Nucleotide-binding protein CLD_1131 of Clostridium botulinum (strain Okra / Type B1).